The primary structure comprises 299 residues: ATP phosphoribosyltransferase (299 aa).

This sequence belongs to the ATP phosphoribosyltransferase family. Long subfamily. In terms of assembly, equilibrium between an active dimeric form, an inactive hexameric form and higher aggregates. Interconversion between the various forms is largely reversible and is influenced by the natural substrates and inhibitors of the enzyme. Mg(2+) is required as a cofactor.

The protein localises to the cytoplasm. The catalysed reaction is 1-(5-phospho-beta-D-ribosyl)-ATP + diphosphate = 5-phospho-alpha-D-ribose 1-diphosphate + ATP. The protein operates within amino-acid biosynthesis; L-histidine biosynthesis; L-histidine from 5-phospho-alpha-D-ribose 1-diphosphate: step 1/9. Feedback inhibited by histidine. Its function is as follows. Catalyzes the condensation of ATP and 5-phosphoribose 1-diphosphate to form N'-(5'-phosphoribosyl)-ATP (PR-ATP). Has a crucial role in the pathway because the rate of histidine biosynthesis seems to be controlled primarily by regulation of HisG enzymatic activity. The polypeptide is ATP phosphoribosyltransferase (Escherichia coli O81 (strain ED1a)).